The following is a 1464-amino-acid chain: Collagen alpha-1(III) chain (1464 aa).

The first 23 residues, 1–23 (MMSFVQSGTWFLLTLLHPTLILA), serve as a signal peptide directing secretion. The propeptide at 24–154 (QQSNVDELGC…CPTGGQNYSP (131 aa)) is N-terminal propeptide. Residues 31 to 90 (LGCSHLGQSYESRDVWKPEPCQICVCDSGSVLCDDIICDEEPLDCPNPEIPFGECCAICP) enclose the VWFC domain. The segment at 97–1195 (PVLPDGHGPQ…PGPPGAPGPC (1099 aa)) is disordered. The span at 100–109 (PDGHGPQGPK) shows a compositional bias: low complexity. Residues 147-156 (TGGQNYSPQF) are compositionally biased toward polar residues. Residues 155-169 (QFDSYDVKSGVGGMG) are nonhelical region (N-terminal). The span at 164-173 (GVGGMGGYPG) shows a compositional bias: gly residues. The tract at residues 170–1195 (GYPGPAGPPG…PGPPGAPGPC (1026 aa)) is triple-helical region. Over residues 174–184 (PAGPPGPPGPP) the composition is skewed to pro residues. The segment covering 186–198 (SSGHPGSPGSPGY) has biased composition (low complexity). Residues 228–240 (KDGESGRPGRPGE) show a composition bias toward basic and acidic residues. 5-hydroxylysine; alternate is present on lysine 262. The O-linked (Gal...) hydroxylysine; alternate glycan is linked to lysine 262. Positions 265 to 276 (RGFDGRNGEKGE) are enriched in basic and acidic residues. Residue lysine 283 is modified to 5-hydroxylysine. 2 stretches are compositionally biased toward low complexity: residues 310–321 (PGLPGAAGARGN) and 354–379 (PAGS…AGAQ). Over residues 389-398 (GSPGGKGEMG) the composition is skewed to gly residues. Positions 399–412 (PAGIPGAPGLIGAR) are enriched in low complexity. Over residues 527–548 (GTPGGPGIRGMPGSPGGPGNDG) the composition is skewed to gly residues. Residues 606–615 (PAGKNGETGP) show a composition bias toward low complexity. Gly residues-rich tracts occupy residues 641–650 (GIPGTGGPPG) and 668–677 (GAPGGKGDSG). The span at 678–691 (APGERGPPGTAGIP) shows a compositional bias: low complexity. Gly residues predominate over residues 692-708 (GARGGAGPPGPEGGKGP). Residues 717–727 (ASGSPGLQGMP) show a composition bias toward low complexity. Basic and acidic residues predominate over residues 822–834 (AKGERGAPGEKGE). Position 859 is a 5-hydroxylysine (lysine 859). Residues 863–879 (GSPGGPGTAGFPGGRGL) show a composition bias toward gly residues. The span at 889–906 (PGPPGPSGAPGKDGPPGP) shows a compositional bias: pro residues. Low complexity-rich tracts occupy residues 907-934 (AGNS…KGPP) and 945-960 (PLGI…LAGP). A 5-hydroxylysine modification is found at lysine 976. Pro residues predominate over residues 1045-1054 (PGHPGPPGPV). The segment covering 1068–1084 (PAGPSGAPGPAGARGAP) has biased composition (low complexity). Lysine 1093 and lysine 1105 each carry 5-hydroxylysine. Residues 1120 to 1132 (PGAAGHQGAIGSP) show a composition bias toward low complexity. Over residues 1180-1192 (PGQPGPPGPPGAP) the composition is skewed to pro residues. A propeptide spans 1220 to 1464 (DDPMDFKINT…GVDIGPVCFL (245 aa)) (C-terminal propeptide). A Fibrillar collagen NC1 domain is found at 1230-1464 (EEIMSSLKSV…GVDIGPVCFL (235 aa)). 3 disulfides stabilise this stretch: cysteine 1260/cysteine 1292, cysteine 1300/cysteine 1462, and cysteine 1370/cysteine 1415. Residues aspartate 1278, asparagine 1280, glutamine 1281, cysteine 1283, and aspartate 1286 each coordinate Ca(2+).

This sequence belongs to the fibrillar collagen family. As to quaternary structure, trimers of identical alpha 1(III) chains. The chains are linked to each other by interchain disulfide bonds. Trimers are also cross-linked via hydroxylysines. Interacts with ADGRG1. In terms of processing, proline residues at the third position of the tripeptide repeating unit (G-X-Y) are hydroxylated in some or all of the chains. O-linked glycan consists of a Glc-Gal disaccharide bound to the oxygen atom of a post-translationally added hydroxyl group. In terms of tissue distribution, expressed in embryonic brain, specifically in the meninges, pial basement membrane and blood vessels (at protein level).

The protein resides in the secreted. The protein localises to the extracellular space. It is found in the extracellular matrix. Its function is as follows. Collagen type III occurs in most soft connective tissues along with type I collagen. Involved in regulation of cortical development. Is the major ligand of ADGRG1 in the developing brain and binding to ADGRG1 inhibits neuronal migration and activates the RhoA pathway by coupling ADGRG1 to GNA13 and possibly GNA12. The protein is Collagen alpha-1(III) chain (Col3a1) of Mus musculus (Mouse).